Here is a 370-residue protein sequence, read N- to C-terminus: MITAYILFTVTVGVTNSIVFYLDDHIGTRHFKKRVYCSSAWIVAWRLMEMVIFALSVYLYSRWTSKRITGPLEKITDAIQKMREGEFAQRLCFKADYELTLIQEHFNEMVAHLEKTEAEKNKLEQSKQRMLLDLSHDFKTPITTIQGYAMALQMGVVDSPEKQRRYLEMIYNKSIIVTALVEDMFQLATLDSPDLPSAEEHGRFGRTGSEIAIAYFDQFEQNKFSLDLKIPTQRVMIRMNRNLLYRALSNLLSNTLKHNPKGTKVALSLTDTHEAILLEVMDNGIGIAEELKESIFQPFVRGDKARTGEGTGLGLPSPKKRLNFMVESCCSRVNQGKQYSRSFSQRLENDLPYRLPYHRMNKFHRNANQQ.

A run of 2 helical transmembrane segments spans residues isoleucine 2–leucine 22 and alanine 40–tyrosine 60. The region spanning lysine 66–alanine 118 is the HAMP domain. One can recognise a Histidine kinase domain in the interval aspartate 133–leucine 355.

The protein localises to the cell membrane. The enzyme catalyses ATP + protein L-histidine = ADP + protein N-phospho-L-histidine.. In terms of biological role, member of the two-component regulatory system GtcS/GtcR which may act in the control of the transcription of the grs operon which encodes the multienzymes involved in the biosynthesis of the peptide antibiotic gramicidin S. Probably activates GtcR by phosphorylation. In Aneurinibacillus migulanus (Bacillus migulanus), this protein is Sensor protein GtcS (gtcS).